A 64-amino-acid chain; its full sequence is Large ribosomal subunit protein bL35 (64 aa).

Residues 1-20 form a disordered region; it reads MKQKTHKGTAKRIKVTGSGK.

It belongs to the bacterial ribosomal protein bL35 family.

This Corynebacterium urealyticum (strain ATCC 43042 / DSM 7109) protein is Large ribosomal subunit protein bL35.